Reading from the N-terminus, the 396-residue chain is NADH-quinone oxidoreductase subunit D 1 (396 aa).

The protein belongs to the complex I 49 kDa subunit family. NDH-1 is composed of 14 different subunits. Subunits NuoB, C, D, E, F, and G constitute the peripheral sector of the complex.

The protein resides in the cell inner membrane. The enzyme catalyses a quinone + NADH + 5 H(+)(in) = a quinol + NAD(+) + 4 H(+)(out). NDH-1 shuttles electrons from NADH, via FMN and iron-sulfur (Fe-S) centers, to quinones in the respiratory chain. The immediate electron acceptor for the enzyme in this species is believed to be ubiquinone. Couples the redox reaction to proton translocation (for every two electrons transferred, four hydrogen ions are translocated across the cytoplasmic membrane), and thus conserves the redox energy in a proton gradient. The chain is NADH-quinone oxidoreductase subunit D 1 from Nitrobacter hamburgensis (strain DSM 10229 / NCIMB 13809 / X14).